An 85-amino-acid chain; its full sequence is Beta-defensin 18 (85 aa).

The N-terminal stretch at 1–23 is a signal peptide; it reads MQSAMKLFFIFLIFVFSVSCGPS. Cystine bridges form between Cys-39/Cys-65, Cys-46/Cys-60, and Cys-50/Cys-66.

Belongs to the beta-defensin family.

It is found in the secreted. Its function is as follows. Has antibacterial activity. The chain is Beta-defensin 18 (Defb18) from Rattus norvegicus (Rat).